Here is a 279-residue protein sequence, read N- to C-terminus: Energy-coupling factor transporter ATP-binding protein EcfA2 (279 aa).

Positions 3–245 constitute an ABC transporter domain; sequence ITLKNVSYTY…LDFMESIQLG (243 aa). ATP is bound at residue 40-47; it reads GHTGSGKS.

The protein belongs to the ABC transporter superfamily. Energy-coupling factor EcfA family. In terms of assembly, forms a stable energy-coupling factor (ECF) transporter complex composed of 2 membrane-embedded substrate-binding proteins (S component), 2 ATP-binding proteins (A component) and 2 transmembrane proteins (T component).

Its subcellular location is the cell membrane. In terms of biological role, ATP-binding (A) component of a common energy-coupling factor (ECF) ABC-transporter complex. Unlike classic ABC transporters this ECF transporter provides the energy necessary to transport a number of different substrates. The chain is Energy-coupling factor transporter ATP-binding protein EcfA2 from Streptococcus sanguinis (strain SK36).